The chain runs to 230 residues: Large ribosomal subunit protein uL1 (230 aa).

It belongs to the universal ribosomal protein uL1 family. As to quaternary structure, part of the 50S ribosomal subunit.

Its function is as follows. Binds directly to 23S rRNA. The L1 stalk is quite mobile in the ribosome, and is involved in E site tRNA release. Protein L1 is also a translational repressor protein, it controls the translation of the L11 operon by binding to its mRNA. The protein is Large ribosomal subunit protein uL1 of Aster yellows witches'-broom phytoplasma (strain AYWB).